The following is a 505-amino-acid chain: Flagellin (505 aa).

This sequence belongs to the bacterial flagellin family.

It localises to the secreted. Its subcellular location is the bacterial flagellum. Flagellin is the subunit protein which polymerizes to form the filaments of bacterial flagella. The sequence is that of Flagellin (fliC) from Salmonella enteritidis.